The following is a 341-amino-acid chain: 5-formaminoimidazole-4-carboxamide-1-(beta)-D-ribofuranosyl 5'-monophosphate synthetase (341 aa).

Histidine 27 and serine 92 together coordinate 5-amino-1-(5-phospho-beta-D-ribosyl)imidazole-4-carboxamide. An ATP-grasp domain is found at 113–328 (RELLRWEADQ…MGERIAHEIK (216 aa)). Residues 143-195 (AEEV…VPAY) and glutamate 217 each bind ATP. Asparagine 237 is a binding site for 5-amino-1-(5-phospho-beta-D-ribosyl)imidazole-4-carboxamide. Mg(2+) is bound by residues glutamate 276 and glutamate 289.

This sequence belongs to the phosphohexose mutase family. The cofactor is Mg(2+). Requires Mn(2+) as cofactor.

The catalysed reaction is 5-amino-1-(5-phospho-beta-D-ribosyl)imidazole-4-carboxamide + formate + ATP = 5-formamido-1-(5-phospho-D-ribosyl)imidazole-4-carboxamide + ADP + phosphate. Its pathway is purine metabolism; IMP biosynthesis via de novo pathway; 5-formamido-1-(5-phospho-D-ribosyl)imidazole-4-carboxamide from 5-amino-1-(5-phospho-D-ribosyl)imidazole-4-carboxamide (formate route): step 1/1. Catalyzes the ATP- and formate-dependent formylation of 5-aminoimidazole-4-carboxamide-1-beta-d-ribofuranosyl 5'-monophosphate (AICAR) to 5-formaminoimidazole-4-carboxamide-1-beta-d-ribofuranosyl 5'-monophosphate (FAICAR) in the absence of folates. In Pyrobaculum aerophilum (strain ATCC 51768 / DSM 7523 / JCM 9630 / CIP 104966 / NBRC 100827 / IM2), this protein is 5-formaminoimidazole-4-carboxamide-1-(beta)-D-ribofuranosyl 5'-monophosphate synthetase.